We begin with the raw amino-acid sequence, 500 residues long: UBX domain-containing protein 5 (500 aa).

The span at 50 to 61 (SNNTPTPSNSTP) shows a compositional bias: low complexity. A disordered region spans residues 50–70 (SNNTPTPSNSTPMAPTSVDSD). Serine 139 is subject to Phosphoserine. Disordered stretches follow at residues 142 to 169 (NQRLDDTNTNTYINDNSSDSLDSEEEND) and 371 to 399 (ESLNNNSSKSNQEEVPSTGEEQKRVQEPD). The span at 148-161 (TNTNTYINDNSSDS) shows a compositional bias: low complexity. Positions 415–493 (KPGITTRIQI…GLKNSSLLLE (79 aa)) constitute a UBX domain.

Interacts with CDC48.

It localises to the nucleus. Its subcellular location is the cytoplasm. Involved in CDC48-dependent protein degradation through the ubiquitin/proteasome pathway. The chain is UBX domain-containing protein 5 (UBX5) from Saccharomyces cerevisiae (strain ATCC 204508 / S288c) (Baker's yeast).